The primary structure comprises 102 residues: Circadian clock oscillator protein KaiA (102 aa).

In terms of domain architecture, KaiA C-terminal spans 1-102; sequence MTQEVDQQIL…CEAYRGAIFK (102 aa).

This sequence belongs to the KaiA family. In terms of assembly, homodimer. The KaiABC complex composition changes during the circadian cycle to control KaiC phosphorylation. Complexes KaiC(6), KaiA(2-4):KaiC(6), KaiB(6):KaiC(6) and KaiC(6):KaiB(6):KaiA(12) are among the most important forms, many form cooperatively. KaiA and CikA bind to the same region of the KaiB(fs) form and therefore compete.

Its function is as follows. Key component of the KaiABC oscillator complex, which constitutes the main circadian regulator in cyanobacteria. Complex composition changes during the circadian cycle to control KaiC phosphorylation. KaiA stimulates KaiC autophosphorylation, while KaiB sequesters KaiA, leading to KaiC autodephosphorylation. KaiA binding to the KaiC CII domain during the subjective day yields KaiA(2-4):KaiC(6) complexes which stimulate KaiC autophosphorylation. Phospho-Ser-431 KaiC accumulation triggers binding of KaiB during the subjective night to form the KaiB(6):KaiC(6) complex, leading to changes in the output regulators CikA and SasA. KaiB(6):KaiC(6) formation exposes a site for KaiA binding on KaiB that sequesters KaiA from KaiC's CII domain, making the KaiC(6):KaiB(6):KaiA(12) complex resulting in KaiC autodephosphorylation. Complete dephosphorylation of KaiC leads to dissociation of KaiA(2):KaiB(1), completing 1 cycle of the Kai oscillator. The protein is Circadian clock oscillator protein KaiA of Nostoc sp. (strain PCC 7120 / SAG 25.82 / UTEX 2576).